The following is a 182-amino-acid chain: Large ribosomal subunit protein uL6 (182 aa).

This sequence belongs to the universal ribosomal protein uL6 family. As to quaternary structure, part of the 50S ribosomal subunit.

Functionally, this protein binds to the 23S rRNA, and is important in its secondary structure. It is located near the subunit interface in the base of the L7/L12 stalk, and near the tRNA binding site of the peptidyltransferase center. This Dehalococcoides mccartyi (strain CBDB1) protein is Large ribosomal subunit protein uL6.